Here is a 459-residue protein sequence, read N- to C-terminus: ATP-dependent protease ATPase subunit HslU (459 aa).

ATP is bound by residues Val-18, 60 to 65 (GVGKTE), Asp-272, Glu-337, and Arg-409.

This sequence belongs to the ClpX chaperone family. HslU subfamily. As to quaternary structure, a double ring-shaped homohexamer of HslV is capped on each side by a ring-shaped HslU homohexamer. The assembly of the HslU/HslV complex is dependent on binding of ATP.

It localises to the cytoplasm. Functionally, ATPase subunit of a proteasome-like degradation complex; this subunit has chaperone activity. The binding of ATP and its subsequent hydrolysis by HslU are essential for unfolding of protein substrates subsequently hydrolyzed by HslV. HslU recognizes the N-terminal part of its protein substrates and unfolds these before they are guided to HslV for hydrolysis. The chain is ATP-dependent protease ATPase subunit HslU from Thermoanaerobacter sp. (strain X514).